We begin with the raw amino-acid sequence, 119 residues long: BLOC-1-related complex subunit 8 (119 aa).

A Phosphoserine modification is found at Ser-109.

This sequence belongs to the BORCS8 family. As to quaternary structure, component of the BLOC-one-related complex (BORC) which is composed of BLOC1S1, BLOC1S2, BORCS5, BORCS6, BORCS7, BORCS8, KXD1 and SNAPIN.

It localises to the lysosome membrane. Its function is as follows. As part of the BLOC-one-related complex (BORC), it plays a role in the movement and localization of lysosomes at the cell periphery. Associated with the cytosolic face of lysosomes, BORC recruits ARL8B to the lysosomal membrane and couples lysosomes to microtubule plus-end-directed kinesin motors, driving lysosome movement toward the cell periphery. The protein is BLOC-1-related complex subunit 8 of Homo sapiens (Human).